Here is a 129-residue protein sequence, read N- to C-terminus: Histone H2B.2 (129 aa).

The span at 1 to 19 (MAPKAEKKPASKAPAEKKP) shows a compositional bias: basic and acidic residues. The tract at residues 1-38 (MAPKAEKKPASKAPAEKKPAAKKTATSGTKKRSKTRKE) is disordered. Lysine 7 and lysine 8 each carry N6-acetyllysine; alternate. Residues lysine 7 and lysine 8 each participate in a glycyl lysine isopeptide (Lys-Gly) (interchain with G-Cter in SUMO); alternate cross-link. A Phosphoserine modification is found at serine 11. Lysine 12 carries the N6-acetyllysine modification. Lysine 17 is subject to N6-acetyllysine; alternate. A Glycyl lysine isopeptide (Lys-Gly) (interchain with G-Cter in SUMO); alternate cross-link involves residue lysine 17. Lysine 18 is covalently cross-linked (Glycyl lysine isopeptide (Lys-Gly) (interchain with G-Cter in SUMO)). Lysine 123 participates in a covalent cross-link: Glycyl lysine isopeptide (Lys-Gly) (interchain with G-Cter in ubiquitin).

This sequence belongs to the histone H2B family. The nucleosome is a histone octamer containing two molecules each of H2A, H2B, H3 and H4 assembled in one H3-H4 heterotetramer and two H2A-H2B heterodimers. The octamer wraps approximately 147 bp of DNA. Monoubiquitinated by the UBC2-BRE1 complex to form H2BK123ub1. H2BK123ub1 gives a specific tag for epigenetic transcriptional activation and is also prerequisite for H3K4me and H3K79me formation. H2BK123ub1 also modulates the formation of double-strand breaks during meiosis and is a prerequisite for DNA-damage checkpoint activation. In terms of processing, phosphorylated by STE20 to form H2BS10ph during progression through meiotic prophase. May be correlated with chromosome condensation. Post-translationally, acetylated by GCN5 to form H2BK11ac and H2BK16ac. H2BK16ac can also be formed by ESA1. Acetylation of N-terminal lysines and particularly formation of H2BK11acK16ac has a positive effect on transcription. Sumoylation to form H2BK6su or H2BK7su, and probably also H2BK16su or H2BK17su, occurs preferentially near the telomeres and represses gene transcription.

Its subcellular location is the nucleus. The protein resides in the chromosome. Functionally, core component of nucleosome. Nucleosomes wrap and compact DNA into chromatin, limiting DNA accessibility to the cellular machineries which require DNA as a template. Histones thereby play a central role in transcription regulation, DNA repair, DNA replication and chromosomal stability. DNA accessibility is regulated via a complex set of post-translational modifications of histones, also called histone code, and nucleosome remodeling. The chain is Histone H2B.2 (HTB2) from Debaryomyces hansenii (strain ATCC 36239 / CBS 767 / BCRC 21394 / JCM 1990 / NBRC 0083 / IGC 2968) (Yeast).